Here is a 676-residue protein sequence, read N- to C-terminus: Methionine--tRNA ligase (676 aa).

The short motif at 15–25 (PYANGPIHLGH) is the 'HIGH' region element. Positions 146, 149, 159, and 162 each coordinate Zn(2+). Residues 332–336 (KMSKS) carry the 'KMSKS' region motif. Lysine 335 contributes to the ATP binding site. The region spanning 575 to 676 (DFAKIDLRIA…EGAQPGMRVK (102 aa)) is the tRNA-binding domain.

The protein belongs to the class-I aminoacyl-tRNA synthetase family. MetG type 1 subfamily. Homodimer. It depends on Zn(2+) as a cofactor.

Its subcellular location is the cytoplasm. It carries out the reaction tRNA(Met) + L-methionine + ATP = L-methionyl-tRNA(Met) + AMP + diphosphate. Functionally, is required not only for elongation of protein synthesis but also for the initiation of all mRNA translation through initiator tRNA(fMet) aminoacylation. In Shewanella sp. (strain ANA-3), this protein is Methionine--tRNA ligase.